We begin with the raw amino-acid sequence, 173 residues long: Translation initiation factor IF-3 (173 aa).

The protein belongs to the IF-3 family. As to quaternary structure, monomer.

The protein localises to the cytoplasm. Functionally, IF-3 binds to the 30S ribosomal subunit and shifts the equilibrium between 70S ribosomes and their 50S and 30S subunits in favor of the free subunits, thus enhancing the availability of 30S subunits on which protein synthesis initiation begins. This chain is Translation initiation factor IF-3, found in Campylobacter lari (strain RM2100 / D67 / ATCC BAA-1060).